Consider the following 78-residue polypeptide: DNA-directed RNA polymerase subunit Rpo5 (78 aa).

It belongs to the archaeal Rpo5/eukaryotic RPB5 RNA polymerase subunit family. In terms of assembly, part of the RNA polymerase complex.

The protein resides in the cytoplasm. It carries out the reaction RNA(n) + a ribonucleoside 5'-triphosphate = RNA(n+1) + diphosphate. Its function is as follows. DNA-dependent RNA polymerase (RNAP) catalyzes the transcription of DNA into RNA using the four ribonucleoside triphosphates as substrates. This is DNA-directed RNA polymerase subunit Rpo5 from Methanosarcina barkeri (strain Fusaro / DSM 804).